Reading from the N-terminus, the 345-residue chain is Cytoskeleton protein RodZ (345 aa).

Topologically, residues 1 to 111 (MNTEASQDQT…LGKKHKKRDG (111 aa)) are cytoplasmic. The 61-residue stretch at 19–79 (LRQARESLGL…KLVHLPEDEL (61 aa)) folds into the HTH cro/C1-type domain. A DNA-binding region (H-T-H motif) is located at residues 30 to 49 (QQTVAERLCLKVSTIRDIEE). A helical; Signal-anchor for type II membrane protein transmembrane segment spans residues 112–132 (WLMSFTWLIVLVVLGLTGAWW). At 133–345 (WQNHQAQQAE…RVARLTVCVE (213 aa)) the chain is on the periplasmic side. Positions 151–259 (SAQLSQNGGQ…PLPTADAGVS (109 aa)) are disordered. Residues 188–225 (PLTNHSGSAITNSATTSSVPKTTSTEPVDTANTNTTMH) show a composition bias toward polar residues. Residues 229-241 (AASAAVSPSQVPQ) are compositionally biased toward low complexity.

This sequence belongs to the RodZ family.

The protein localises to the cell inner membrane. Functionally, cytoskeletal protein that is involved in cell-shape control through regulation of the length of the long axis. The chain is Cytoskeleton protein RodZ from Yersinia pestis bv. Antiqua (strain Antiqua).